We begin with the raw amino-acid sequence, 150 residues long: 1,4-dihydroxy-2-naphthoyl-CoA hydrolase (150 aa).

Residue Asp-19 is part of the active site.

This sequence belongs to the 4-hydroxybenzoyl-CoA thioesterase family. DHNA-CoA hydrolase subfamily.

The enzyme catalyses 1,4-dihydroxy-2-naphthoyl-CoA + H2O = 1,4-dihydroxy-2-naphthoate + CoA + H(+). It participates in cofactor biosynthesis; phylloquinone biosynthesis. It functions in the pathway quinol/quinone metabolism; 1,4-dihydroxy-2-naphthoate biosynthesis; 1,4-dihydroxy-2-naphthoate from chorismate: step 7/7. In terms of biological role, catalyzes the hydrolysis of 1,4-dihydroxy-2-naphthoyl-CoA (DHNA-CoA) to 1,4-dihydroxy-2-naphthoate (DHNA), a reaction involved in phylloquinone (vitamin K1) biosynthesis. The polypeptide is 1,4-dihydroxy-2-naphthoyl-CoA hydrolase (Prochlorococcus marinus (strain AS9601)).